We begin with the raw amino-acid sequence, 151 residues long: UPF0178 protein PMI1258 (151 aa).

Belongs to the UPF0178 family.

The sequence is that of UPF0178 protein PMI1258 from Proteus mirabilis (strain HI4320).